Here is a 331-residue protein sequence, read N- to C-terminus: Phenylalanine--tRNA ligase alpha subunit (331 aa).

Glu-252 provides a ligand contact to Mg(2+).

The protein belongs to the class-II aminoacyl-tRNA synthetase family. Phe-tRNA synthetase alpha subunit type 1 subfamily. Tetramer of two alpha and two beta subunits. Mg(2+) serves as cofactor.

The protein resides in the cytoplasm. It carries out the reaction tRNA(Phe) + L-phenylalanine + ATP = L-phenylalanyl-tRNA(Phe) + AMP + diphosphate + H(+). In Xanthomonas axonopodis pv. citri (strain 306), this protein is Phenylalanine--tRNA ligase alpha subunit.